Reading from the N-terminus, the 465-residue chain is L-seryl-tRNA(Sec) selenium transferase (465 aa).

Lys-294 carries the N6-(pyridoxal phosphate)lysine modification.

It belongs to the SelA family. Pyridoxal 5'-phosphate serves as cofactor.

It is found in the cytoplasm. It carries out the reaction L-seryl-tRNA(Sec) + selenophosphate + H(+) = L-selenocysteinyl-tRNA(Sec) + phosphate. It functions in the pathway aminoacyl-tRNA biosynthesis; selenocysteinyl-tRNA(Sec) biosynthesis; selenocysteinyl-tRNA(Sec) from L-seryl-tRNA(Sec) (bacterial route): step 1/1. In terms of biological role, converts seryl-tRNA(Sec) to selenocysteinyl-tRNA(Sec) required for selenoprotein biosynthesis. This Mannheimia succiniciproducens (strain KCTC 0769BP / MBEL55E) protein is L-seryl-tRNA(Sec) selenium transferase.